A 472-amino-acid polypeptide reads, in one-letter code: MSRSDTDGRDTSFASRNGVGGSQLSEPPSQRRERPDYGYAVEETHRPHTAQERFPDSHGQRSAPDLYSRDSDRFSYHRGDTLTPAQERSYQRELELMKARGEQERSYGGASASRSSRPLEADHHYGGMPLTRGLVDDFAPEPMASSGRPNLEGFSRVENGRRYRLVVVQHPSRARMCGFGDKDRRPLSPTLIVKLIITEEATGEEISPCEVNTSLFLLATDLCHPDDLMLAPRNILVHHHASSLSSNPIQHGGAGGYATDEFGHRSGSSLGNFAADGGGPCDDGYRSSTHPQHASESTGAAALPLSSSSMNPYDRSPHASSSIQFGGGGNFAQQSQAESYTRNLVGAAVASASVLKDEQDKWCTFFVFQDISVRTEGVYRIKLMFVNLEVSGRVGTGVADALAETYTDAFTVYSPRRFPGMLDPTPLSRKLASQGIKIPVRNDKKKQRRRNDEGGDGMGDYDGASGGDEDDE.

4 stretches are compositionally biased toward basic and acidic residues: residues 1 to 10, 29 to 59, 67 to 80, and 89 to 105; these read MSRSDTDGRD, SQRRERPDYGYAVEETHRPHTAQERFPDSHG, YSRDSDRFSYHRGD, and SYQRELELMKARGEQER. Disordered regions lie at residues 1–121, 281–327, and 433–472; these read MSRS…PLEA, CDDG…QFGG, and SQGIKIPVRNDKKKQRRRNDEGGDGMGDYDGASGGDEDDE. A compositionally biased stretch (low complexity) spans 106 to 116; the sequence is SYGGASASRSS. The 284-residue stretch at 158-441 folds into the Velvet domain; it reads ENGRRYRLVV…ASQGIKIPVR (284 aa). A compositionally biased stretch (polar residues) spans 286-298; sequence RSSTHPQHASEST. The span at 456 to 466 shows a compositional bias: gly residues; the sequence is DGMGDYDGASG.

Belongs to the velvet family. VelB subfamily. In terms of assembly, component of the heterotrimeric velvet complex composed of laeA, veA and velB; VeA acting as a bridging protein between laeA and velB. Forms a heterodimeric complex with vosA; the formation of the velB-vosA complex is light-dependent.

It is found in the nucleus. The protein localises to the cytoplasm. In terms of biological role, component of the velvet transcription factor complex that controls sexual/asexual developmental ratio in response to light, promoting sexual development in the darkness while stimulating asexual sporulation under illumination. The velvet complex acts as a global regulator for secondary metabolite gene expression. Component of the velB-VosA heterodimeric complex that plays a dual role in activating genes associated with spore maturation and repressing certain development-associated genes. The velB-VosA complex binds DNA through the DNA-binding domain of vosA that recognizes an 11-nucleotide consensus sequence 5'-CTGGCCGCGGC-3' consisting of two motifs in the promoters of key developmental regulatory genes. Required for full virulence on seedlings. The chain is Velvet complex subunit umv2 from Mycosarcoma maydis (Corn smut fungus).